Reading from the N-terminus, the 297-residue chain is Band 7 protein AAEL010189 (297 aa).

Residues 1 to 13 show a composition bias toward polar residues; the sequence is MGVVESITNSTKP. A disordered region spans residues 1–30; sequence MGVVESITNSTKPGVTKKSSPEAEDDSNGE. Residues 37–57 form a helical membrane-spanning segment; the sequence is ILIFLSWVLVVLTMPFSLLVC.

This sequence belongs to the band 7/mec-2 family.

The protein localises to the membrane. This Aedes aegypti (Yellowfever mosquito) protein is Band 7 protein AAEL010189.